We begin with the raw amino-acid sequence, 61 residues long: Metallothionein-2 (61 aa).

N-acetylmethionine is present on methionine 1. The interval 1 to 29 (MDPNCSCATDGSCSCAGSCKCKECKCTTC) is beta. Positions 5, 7, 13, 15, 19, 21, 24, 26, 29, 33, 34, 36, 37, 41, 44, 48, 50, and 57 each coordinate a divalent metal cation. Positions 30–61 (KKSCCSCCPVGCAKCSQGCVCKEASDKCSCCA) are alpha. At serine 58 the chain carries Phosphoserine. The a divalent metal cation site is built by cysteine 59 and cysteine 60.

Belongs to the metallothionein superfamily. Type 1 family.

Metallothioneins have a high content of cysteine residues that bind various heavy metals; these proteins are transcriptionally regulated by both heavy metals and glucocorticoids. The sequence is that of Metallothionein-2 (MT2) from Cricetulus griseus (Chinese hamster).